A 144-amino-acid polypeptide reads, in one-letter code: Maximins 3/H11 type 1 (144 aa).

A signal peptide spans 1–18 (MNFKYIVAVSFLIASAYA). 2 consecutive propeptides follow at residues 19–43 (RSVQNDEQSLSQRDVLEEESLREIR) and 73–122 (RTAE…KKEK). Ile143 carries the post-translational modification Isoleucine amide.

This sequence belongs to the bombinin family. In terms of tissue distribution, expressed by the skin glands.

The protein localises to the secreted. Maximin-3 shows antibacterial activity against both Gram-positive and Gram-negative bacteria. It also shows antimicrobial activity against the fungus C.albicans, but not against A.flavus nor P.uticale. It has little hemolytic activity. It possess a significant cytotoxicity against tumor cell lines. It possess a significant anti-HIV activity. It shows high spermicidal activity. Its function is as follows. Maximin-H11 shows antimicrobial activity against bacteria and against the fungus C.albicans. Shows strong hemolytic activity. The protein is Maximins 3/H11 type 1 of Bombina maxima (Giant fire-bellied toad).